A 305-amino-acid polypeptide reads, in one-letter code: tRNA uridine(34) hydroxylase (305 aa).

The Rhodanese domain occupies 125–219; that stretch reads ADENTVVVDK…YLEEVPREQS (95 aa). The Cysteine persulfide intermediate role is filled by cysteine 179.

This sequence belongs to the TrhO family.

It carries out the reaction uridine(34) in tRNA + AH2 + O2 = 5-hydroxyuridine(34) in tRNA + A + H2O. Catalyzes oxygen-dependent 5-hydroxyuridine (ho5U) modification at position 34 in tRNAs. This Brucella abortus (strain S19) protein is tRNA uridine(34) hydroxylase.